The chain runs to 111 residues: Ribosome-binding factor A (111 aa).

Belongs to the RbfA family. Monomer. Binds 30S ribosomal subunits, but not 50S ribosomal subunits or 70S ribosomes.

The protein localises to the cytoplasm. One of several proteins that assist in the late maturation steps of the functional core of the 30S ribosomal subunit. Associates with free 30S ribosomal subunits (but not with 30S subunits that are part of 70S ribosomes or polysomes). Required for efficient processing of 16S rRNA. May interact with the 5'-terminal helix region of 16S rRNA. This chain is Ribosome-binding factor A, found in Helicobacter pylori (strain P12).